The primary structure comprises 397 residues: Lysophospholipid transporter LplT (397 aa).

The Periplasmic segment spans residues 1–17 (MSESVHTNTSLWSKGMK). Residues 18-38 (AVIVAQFLSAFGDNALLFATL) traverse the membrane as a helical segment. Over 39 to 52 (ALLKAQFYPEWSQP) the chain is Cytoplasmic. A helical membrane pass occupies residues 53–73 (ILQMVFVGAYILFAPFVGQVA). The Periplasmic segment spans residues 74–90 (DSFAKGRVMMFANGLKL). A helical transmembrane segment spans residues 91–111 (LGAASICFGINPFLGYTLVGV). Residues 112–144 (GAAAYSPAKYGILGELTTGSKLVKANGLMEAST) are Cytoplasmic-facing. The chain crosses the membrane as a helical span at residues 145-165 (IAAILLGSVAGGVLADWHVLV). Position 166 (A166) is a topological domain, periplasmic. Residues 167-187 (LAACALAYGGAVVANIYIPKL) traverse the membrane as a helical segment. The Cytoplasmic portion of the chain corresponds to 188–226 (AAARPGQSWNLINMTRSFLNACTSLWRNGETRFSLVGTS). The chain crosses the membrane as a helical span at residues 227-247 (LFWGAGVTLRFLLVLWVPVAL). Over 248-256 (GITDNATPT) the chain is Periplasmic. The helical transmembrane segment at 257 to 277 (YLNAMVAIGIVVGAGAAAKLV) threads the bilayer. At 278–280 (TLE) the chain is on the cytoplasmic side. Residues 281–301 (TVSRCMPAGILIGVVVLIFSL) traverse the membrane as a helical segment. Residues 302 to 304 (QHE) are Periplasmic-facing. The helical transmembrane segment at 305 to 325 (LLPAYALLMLIGVLGGFFVVP) threads the bilayer. The Cytoplasmic portion of the chain corresponds to 326–343 (LNALLQERGKKSVGAGNA). Residues 344–364 (IAVQNLGENSAMLLMLGIYSL) traverse the membrane as a helical segment. Residues 365–366 (AV) lie on the Periplasmic side of the membrane. The helical transmembrane segment at 367–387 (MVGIPVVPIGIGFGALFALAI) threads the bilayer. The Cytoplasmic segment spans residues 388–397 (TALWIWQRRY).

Belongs to the major facilitator superfamily. LplT (TC 2.A.1.42) family.

It is found in the cell inner membrane. Catalyzes the facilitated diffusion of 2-acyl-glycero-3-phosphoethanolamine (2-acyl-GPE) into the cell. The chain is Lysophospholipid transporter LplT from Escherichia coli O127:H6 (strain E2348/69 / EPEC).